Here is a 627-residue protein sequence, read N- to C-terminus: Phosphomethylpyrimidine synthase (627 aa).

Residues 1 to 24 (MSATQKNNITRLEQLDRQSTQPFP) are compositionally biased toward polar residues. Residues 1–29 (MSATQKNNITRLEQLDRQSTQPFPNSRKV) are disordered. Substrate-binding positions include asparagine 231, methionine 260, tyrosine 289, histidine 325, 345-347 (SRG), 386-389 (DGLR), and glutamate 425. Histidine 429 lines the Zn(2+) pocket. Residue tyrosine 452 participates in substrate binding. Histidine 493 provides a ligand contact to Zn(2+). Residues cysteine 573, cysteine 576, and cysteine 581 each contribute to the [4Fe-4S] cluster site.

The protein belongs to the ThiC family. In terms of assembly, homodimer. It depends on [4Fe-4S] cluster as a cofactor.

It catalyses the reaction 5-amino-1-(5-phospho-beta-D-ribosyl)imidazole + S-adenosyl-L-methionine = 4-amino-2-methyl-5-(phosphooxymethyl)pyrimidine + CO + 5'-deoxyadenosine + formate + L-methionine + 3 H(+). It functions in the pathway cofactor biosynthesis; thiamine diphosphate biosynthesis. Functionally, catalyzes the synthesis of the hydroxymethylpyrimidine phosphate (HMP-P) moiety of thiamine from aminoimidazole ribotide (AIR) in a radical S-adenosyl-L-methionine (SAM)-dependent reaction. This Pseudomonas aeruginosa (strain LESB58) protein is Phosphomethylpyrimidine synthase.